The following is a 495-amino-acid chain: Protein YhjJ (495 aa).

The first 24 residues, 1–24 (MQGTKIRLLAGSLLMLASAGYVQA), serve as a signal peptide directing secretion.

It belongs to the peptidase M16 family.

Its subcellular location is the periplasm. The protein is Protein YhjJ (yhjJ) of Salmonella typhimurium (strain LT2 / SGSC1412 / ATCC 700720).